The following is a 511-amino-acid chain: Maturase K (511 aa).

Belongs to the intron maturase 2 family. MatK subfamily.

Its subcellular location is the plastid. It localises to the chloroplast. Its function is as follows. Usually encoded in the trnK tRNA gene intron. Probably assists in splicing its own and other chloroplast group II introns. This is Maturase K from Acorus calamus var. americanus (American sweet flag).